The primary structure comprises 514 residues: ATP synthase subunit alpha (514 aa).

170 to 177 contacts ATP; sequence GDRQIGKT.

It belongs to the ATPase alpha/beta chains family. As to quaternary structure, F-type ATPases have 2 components, CF(1) - the catalytic core - and CF(0) - the membrane proton channel. CF(1) has five subunits: alpha(3), beta(3), gamma(1), delta(1), epsilon(1). CF(0) has three main subunits: a(1), b(2) and c(9-12). The alpha and beta chains form an alternating ring which encloses part of the gamma chain. CF(1) is attached to CF(0) by a central stalk formed by the gamma and epsilon chains, while a peripheral stalk is formed by the delta and b chains.

Its subcellular location is the cell inner membrane. The enzyme catalyses ATP + H2O + 4 H(+)(in) = ADP + phosphate + 5 H(+)(out). Produces ATP from ADP in the presence of a proton gradient across the membrane. The alpha chain is a regulatory subunit. The chain is ATP synthase subunit alpha from Pseudomonas putida (strain ATCC 47054 / DSM 6125 / CFBP 8728 / NCIMB 11950 / KT2440).